Here is a 64-residue protein sequence, read N- to C-terminus: Translational regulator CsrA (64 aa).

It belongs to the CsrA/RsmA family. As to quaternary structure, homodimer; the beta-strands of each monomer intercalate to form a hydrophobic core, while the alpha-helices form wings that extend away from the core.

The protein resides in the cytoplasm. Functionally, a key translational regulator that binds mRNA to regulate translation initiation and/or mRNA stability. Mediates global changes in gene expression, shifting from rapid growth to stress survival by linking envelope stress, the stringent response and the catabolite repression systems. Usually binds in the 5'-UTR; binding at or near the Shine-Dalgarno sequence prevents ribosome-binding, repressing translation, binding elsewhere in the 5'-UTR can activate translation and/or stabilize the mRNA. Its function is antagonized by small RNA(s). The protein is Translational regulator CsrA of Dichelobacter nodosus (strain VCS1703A).